The chain runs to 432 residues: D-amino acid dehydrogenase (432 aa).

3–17 lines the FAD pocket; the sequence is VVILGSGVVGVASAW.

It belongs to the DadA oxidoreductase family. FAD serves as cofactor.

The enzyme catalyses a D-alpha-amino acid + A + H2O = a 2-oxocarboxylate + AH2 + NH4(+). It participates in amino-acid degradation; D-alanine degradation; NH(3) and pyruvate from D-alanine: step 1/1. In terms of biological role, oxidative deamination of D-amino acids. This is D-amino acid dehydrogenase from Klebsiella pneumoniae (strain 342).